Here is a 222-residue protein sequence, read N- to C-terminus: Pyrrolidone-carboxylate peptidase (222 aa).

Residues Glu-80, Cys-146, and His-170 contribute to the active site.

The protein belongs to the peptidase C15 family. As to quaternary structure, homotetramer.

The protein localises to the cytoplasm. The catalysed reaction is Release of an N-terminal pyroglutamyl group from a polypeptide, the second amino acid generally not being Pro.. Functionally, removes 5-oxoproline from various penultimate amino acid residues except L-proline. The polypeptide is Pyrrolidone-carboxylate peptidase (Mycobacterium marinum (strain ATCC BAA-535 / M)).